The sequence spans 111 residues: Large ribosomal subunit protein uL22 (111 aa).

This sequence belongs to the universal ribosomal protein uL22 family. Part of the 50S ribosomal subunit.

Its function is as follows. This protein binds specifically to 23S rRNA; its binding is stimulated by other ribosomal proteins, e.g. L4, L17, and L20. It is important during the early stages of 50S assembly. It makes multiple contacts with different domains of the 23S rRNA in the assembled 50S subunit and ribosome. The globular domain of the protein is located near the polypeptide exit tunnel on the outside of the subunit, while an extended beta-hairpin is found that lines the wall of the exit tunnel in the center of the 70S ribosome. The chain is Large ribosomal subunit protein uL22 from Chlamydia caviae (strain ATCC VR-813 / DSM 19441 / 03DC25 / GPIC) (Chlamydophila caviae).